Consider the following 1271-residue polypeptide: DNA-directed RNA polymerase subunit beta (1271 aa).

Belongs to the RNA polymerase beta chain family. The RNAP catalytic core consists of 2 alpha, 1 beta, 1 beta' and 1 omega subunit. When a sigma factor is associated with the core the holoenzyme is formed, which can initiate transcription.

The catalysed reaction is RNA(n) + a ribonucleoside 5'-triphosphate = RNA(n+1) + diphosphate. Functionally, DNA-dependent RNA polymerase catalyzes the transcription of DNA into RNA using the four ribonucleoside triphosphates as substrates. The chain is DNA-directed RNA polymerase subunit beta from Acholeplasma laidlawii (strain PG-8A).